The sequence spans 463 residues: L-seryl-tRNA(Sec) selenium transferase (463 aa).

K295 is modified (N6-(pyridoxal phosphate)lysine).

The protein belongs to the SelA family. Homodecamer; pentamer of dimers. Binds only one seryl-tRNA(Sec) per dimer. Pyridoxal 5'-phosphate serves as cofactor.

It localises to the cytoplasm. The catalysed reaction is L-seryl-tRNA(Sec) + selenophosphate + H(+) = L-selenocysteinyl-tRNA(Sec) + phosphate. It functions in the pathway aminoacyl-tRNA biosynthesis; selenocysteinyl-tRNA(Sec) biosynthesis; selenocysteinyl-tRNA(Sec) from L-seryl-tRNA(Sec) (bacterial route): step 1/1. Functionally, converts seryl-tRNA(Sec) to selenocysteinyl-tRNA(Sec) required for selenoprotein biosynthesis. The sequence is that of L-seryl-tRNA(Sec) selenium transferase from Escherichia coli O7:K1 (strain IAI39 / ExPEC).